We begin with the raw amino-acid sequence, 241 residues long: Fatty acid metabolism regulator protein (241 aa).

The region spanning 11-79 is the HTH gntR-type domain; the sequence is QSPAGLAEEY…HGKPTKVNNI (69 aa). The segment at residues 39–58 is a DNA-binding region (H-T-H motif); it reads ERELAEKIGVTRTTLREVLQ.

As to quaternary structure, homodimer.

The protein localises to the cytoplasm. Functionally, multifunctional regulator of fatty acid metabolism. In Pasteurella multocida (strain Pm70), this protein is Fatty acid metabolism regulator protein.